A 443-amino-acid polypeptide reads, in one-letter code: MRKEEIIERYSRIFPKASRVTYAPIVAVKAKNAKVWDIEEREYIDFLSDAAVQNVGHNNEKVVKAIKEQAERLIHFTFIYGFTLEPLLLAEKLAEISPIEEPKIAFGLSGSDANDGAIKFARAYTKRRTLLSYLKSYYGSTYGASSITGLDFHVRALVGELSDVHYIPYPDCYRCPFGKERNSCKMECVEYIKAKFEGEVYADGVAALFAEPIQGDAGMVVPPEDYFKRVKRILDEHGILLAVDEVQSGLGRTGKWFAIEHFGVKPDIITVAKPLGGGLPISAVVGRAEIMDSLPPLGHAFTLIGNPVASRAALAVIEEIEEKDLLKRAEKLGSYAMKRLGKMKEEYELIGDVRGKGLMIGVDLVKDRETKERAYDEAKKVVWRAYELGLIVAFLQGNVLRIQPPLTIEKETLDEGLDKLERAIADVEEGRVGDEALKFVHGW.

Residues 110–111 and Gln247 contribute to the pyridoxal 5'-phosphate site; that span reads GS. At Lys273 the chain carries N6-(pyridoxal phosphate)lysine. Thr302 contributes to the pyridoxal 5'-phosphate binding site.

The protein belongs to the class-III pyridoxal-phosphate-dependent aminotransferase family. Pyridoxal 5'-phosphate is required as a cofactor.

It carries out the reaction L-leucine = D-leucine. The catalysed reaction is L-methionine = D-methionine. With respect to regulation, activity is strongly inhibited by several metal ions, including Co(2+), Zn(2+), Ni(2+), Cu(2+) and Fe(3+), and nonsubstrate amino acids such as L-arginine and L-lysine. Activity is completely abolished in the presence of hydroxylamine, an inhibitor of pyridoxal phosphate-dependent enzymes. Functionally, amino acid racemase with moderate substrate specificity. Is primarily active toward leucine, which is the preferred substrate, and methionine. Also exhibits lower levels of activity toward phenylalanine, alanine and serine. The chain is Leucine/methionine racemase from Thermococcus litoralis (strain ATCC 51850 / DSM 5473 / JCM 8560 / NS-C).